A 408-amino-acid polypeptide reads, in one-letter code: Succinylornithine transaminase (408 aa).

Position 252 is an N6-(pyridoxal phosphate)lysine (K252).

Belongs to the class-III pyridoxal-phosphate-dependent aminotransferase family. AstC subfamily. It depends on pyridoxal 5'-phosphate as a cofactor.

It catalyses the reaction N(2)-succinyl-L-ornithine + 2-oxoglutarate = N-succinyl-L-glutamate 5-semialdehyde + L-glutamate. Its pathway is amino-acid degradation; L-arginine degradation via AST pathway; L-glutamate and succinate from L-arginine: step 3/5. In terms of biological role, catalyzes the transamination of N(2)-succinylornithine and alpha-ketoglutarate into N(2)-succinylglutamate semialdehyde and glutamate. Can also act as an acetylornithine aminotransferase. This Salmonella paratyphi A (strain ATCC 9150 / SARB42) protein is Succinylornithine transaminase.